A 458-amino-acid polypeptide reads, in one-letter code: Phosphoglucosamine mutase (458 aa).

Catalysis depends on Ser-102, which acts as the Phosphoserine intermediate. The Mg(2+) site is built by Ser-102, Asp-252, Asp-254, and Asp-256. Ser-102 bears the Phosphoserine mark.

It belongs to the phosphohexose mutase family. Mg(2+) serves as cofactor. Activated by phosphorylation.

It catalyses the reaction alpha-D-glucosamine 1-phosphate = D-glucosamine 6-phosphate. In terms of biological role, catalyzes the conversion of glucosamine-6-phosphate to glucosamine-1-phosphate. This chain is Phosphoglucosamine mutase, found in Anaeromyxobacter dehalogenans (strain 2CP-C).